The following is a 195-amino-acid chain: Probable nicotinate-nucleotide adenylyltransferase (195 aa).

This sequence belongs to the NadD family.

The catalysed reaction is nicotinate beta-D-ribonucleotide + ATP + H(+) = deamido-NAD(+) + diphosphate. It functions in the pathway cofactor biosynthesis; NAD(+) biosynthesis; deamido-NAD(+) from nicotinate D-ribonucleotide: step 1/1. Its function is as follows. Catalyzes the reversible adenylation of nicotinate mononucleotide (NaMN) to nicotinic acid adenine dinucleotide (NaAD). This is Probable nicotinate-nucleotide adenylyltransferase from Bordetella petrii (strain ATCC BAA-461 / DSM 12804 / CCUG 43448).